The sequence spans 490 residues: Cysteine desulfurase, mitochondrial (490 aa).

Residues 161 to 162, asparagine 241, glutamine 269, and 289 to 291 each bind pyridoxal 5'-phosphate; these read AT and SSH. Lysine 292 is modified (N6-(pyridoxal phosphate)lysine). Position 329 (threonine 329) interacts with pyridoxal 5'-phosphate. Cysteine 414 (cysteine persulfide intermediate) is an active-site residue. Cysteine 414 contributes to the [2Fe-2S] cluster binding site.

It belongs to the class-V pyridoxal-phosphate-dependent aminotransferase family. NifS/IscS subfamily. Pyridoxal 5'-phosphate serves as cofactor.

The protein resides in the mitochondrion. The catalysed reaction is (sulfur carrier)-H + L-cysteine = (sulfur carrier)-SH + L-alanine. Its function is as follows. Catalyzes the removal of elemental sulfur from cysteine to produce alanine. It supplies the inorganic sulfur for iron-sulfur (Fe-S) clusters. Plays a role in both tRNA-processing and mitochondrial metabolism. Involved in the 2-thio-modification of both 5-carboxymethylaminomethyl-2-thiouridine in mitochondrial tRNAs and 5-methoxycarbonylmethyl-2-thiouridine (mcm5s2U) in cytoplasmic tRNAs. This chain is Cysteine desulfurase, mitochondrial, found in Eremothecium gossypii (strain ATCC 10895 / CBS 109.51 / FGSC 9923 / NRRL Y-1056) (Yeast).